A 454-amino-acid chain; its full sequence is UDP-N-acetylmuramoylalanine--D-glutamate ligase (454 aa).

115–121 lines the ATP pocket; it reads GTNGKTT.

The protein belongs to the MurCDEF family.

It is found in the cytoplasm. The catalysed reaction is UDP-N-acetyl-alpha-D-muramoyl-L-alanine + D-glutamate + ATP = UDP-N-acetyl-alpha-D-muramoyl-L-alanyl-D-glutamate + ADP + phosphate + H(+). It participates in cell wall biogenesis; peptidoglycan biosynthesis. Its function is as follows. Cell wall formation. Catalyzes the addition of glutamate to the nucleotide precursor UDP-N-acetylmuramoyl-L-alanine (UMA). This chain is UDP-N-acetylmuramoylalanine--D-glutamate ligase, found in Thermoanaerobacter pseudethanolicus (strain ATCC 33223 / 39E) (Clostridium thermohydrosulfuricum).